The chain runs to 310 residues: Translocator protein BipD (310 aa).

Coiled-coil stretches lie at residues 127 to 171 (DPIL…LQDY) and 250 to 299 (DTAR…AIST).

It belongs to the invasin protein D family.

It is found in the secreted. Functionally, required for invasion of epithelial cells, as well as for survival within host cells, escape from endocytic vesicles and subsequent actin-tail formation. Probably regulates the secretion of effectors BipB and BipC and their final integration into the target cell membrane. This chain is Translocator protein BipD (bipD), found in Burkholderia pseudomallei (strain 1106a).